Consider the following 168-residue polypeptide: Pleiotrophin (168 aa).

The first 32 residues, Met1–Ala32, serve as a signal peptide directing secretion. 5 disulfides stabilise this stretch: Cys47/Cys76, Cys55/Cys85, Cys62/Cys89, Cys99/Cys131, and Cys109/Cys141. Chondroitin sulfate binding regions lie at residues Lys92–Cys99 and Lys123–Cys131. The tract at residues Lys139 to Asp168 is disordered. The segment at Pro147 to Asp168 is chondroitin sulfate A binding.

The protein belongs to the pleiotrophin family. Interacts with ALK and NEK6. Interacts with PTPRZ1 (via chondroitin sulfate groups); promotes formation of homooligomers; oligomerization impairs tyrosine phosphatase activity. Forms a complex with PTPRZ1 and CTNNB1; this complex inactivates PTPRZ1 protein tyrosine phosphatase activity through PTN interaction and stimulates tyrosine phosphorylation of CTNNB1. Interacts with ITGB3 and ITGA5. Forms a complex with PTPRZ1 and integrin alpha-V/beta-3 (ITGAV:ITGB3) that stimulates endothelial cell migration through ITGB3 'Tyr-773' phosphorylation. Interacts with SDC3 (via heparan sulfate chains); this interaction mediates the neurite outgrowth-promoting signal from PTN to the cytoskeleton of growing neurites; this interaction mediates osteoblast recruitment. Interacts with GPC2 (via heparan sulfate); this interaction promotes neurite outgrowth through binding of PTN with chondroitin sulfate of proteoglycans, thereby releasing PTPRS of chondroitin sulfate proteoglycans (CSPGs) and leading to binding with heparan sulfate of GPC2. Phosphorylated by NEK6.

The protein localises to the secreted. Functionally, secreted growth factor that mediates its signal through cell-surface proteoglycan and non-proteoglycan receptors. Binds cell-surface proteoglycan receptor via their chondroitin sulfate (CS) groups. Thereby regulates many processes like cell proliferation, cell survival, cell growth, cell differentiation and cell migration in several tissues namely neuron and bone. Also plays a role in synaptic plasticity and learning-related behavior by inhibiting long-term synaptic potentiation. Binds PTPRZ1, leading to neutralization of the negative charges of the CS chains of PTPRZ1, inducing PTPRZ1 clustering, thereby causing the dimerization and inactivation of its phosphatase activity leading to increased tyrosine phosphorylation of each of the PTPRZ1 substrates like ALK, CTNNB1 or AFAP1L2 in order to activate the PI3K-AKT pathway. Through PTPRZ1 binding controls oligodendrocyte precursor cell differentiation by enhancing the phosphorylation of AFAP1L2 in order to activate the PI3K-AKT pathway. Forms a complex with PTPRZ1 and integrin alpha-V/beta-3 (ITGAV:ITGB3) that stimulates endothelial cell migration through SRC dephosphorylation and activation that consequently leads to ITGB3 'Tyr-773' phosphorylation. In adult hippocampus promotes dendritic arborization, spine development, and functional integration and connectivity of newborn granule neurons through ALK by activating AKT signaling pathway. Binds GPC2 and chondroitin sulfate proteoglycans (CSPGs) at the neuron surface, leading to abrogation of binding between PTPRS and CSPGs and neurite outgrowth promotion. Binds SDC3 and mediates bone formation by recruiting and attaching osteoblasts/osteoblast precursors to the sites for new bone deposition. Binds ALK and promotes cell survival and cell proliferation through MAPK pathway activation. Inhibits proliferation and enhances differentiation of neural stem cells by inhibiting FGF2-induced fibroblast growth factor receptor signaling pathway. Mediates regulatory mechanisms in normal hemostasis and in hematopoietic regeneration and in maintaining the balance of myeloid and lymphoid regeneration. In addition may play a role in the female reproductive system, auditory response and the progesterone-induced decidualization pathway. The sequence is that of Pleiotrophin from Sus scrofa (Pig).